A 538-amino-acid chain; its full sequence is Bifunctional purine biosynthesis protein PurH (538 aa).

The 151-residue stretch at 8–158 (IPAPDKVEIK…KNHAYVTTLT (151 aa)) folds into the MGS-like domain.

The protein belongs to the PurH family.

The catalysed reaction is (6R)-10-formyltetrahydrofolate + 5-amino-1-(5-phospho-beta-D-ribosyl)imidazole-4-carboxamide = 5-formamido-1-(5-phospho-D-ribosyl)imidazole-4-carboxamide + (6S)-5,6,7,8-tetrahydrofolate. It carries out the reaction IMP + H2O = 5-formamido-1-(5-phospho-D-ribosyl)imidazole-4-carboxamide. The protein operates within purine metabolism; IMP biosynthesis via de novo pathway; 5-formamido-1-(5-phospho-D-ribosyl)imidazole-4-carboxamide from 5-amino-1-(5-phospho-D-ribosyl)imidazole-4-carboxamide (10-formyl THF route): step 1/1. Its pathway is purine metabolism; IMP biosynthesis via de novo pathway; IMP from 5-formamido-1-(5-phospho-D-ribosyl)imidazole-4-carboxamide: step 1/1. In Rhizobium johnstonii (strain DSM 114642 / LMG 32736 / 3841) (Rhizobium leguminosarum bv. viciae), this protein is Bifunctional purine biosynthesis protein PurH.